The sequence spans 189 residues: TATA-box-binding protein 1 (189 aa).

2 tandem repeats follow at residues 10–86 and 101–179.

Belongs to the TBP family.

Functionally, general factor that plays a role in the activation of archaeal genes transcribed by RNA polymerase. Binds specifically to the TATA box promoter element which lies close to the position of transcription initiation. The protein is TATA-box-binding protein 1 (tbp1) of Haloferax volcanii (strain ATCC 29605 / DSM 3757 / JCM 8879 / NBRC 14742 / NCIMB 2012 / VKM B-1768 / DS2) (Halobacterium volcanii).